The sequence spans 206 residues: Holliday junction branch migration complex subunit RuvA (206 aa).

The segment at 1–64 (MIGKLKGTVD…EDQIRLFGFV (64 aa)) is domain I. The tract at residues 65–143 (TEAEREWFRL…AFTAADPGLA (79 aa)) is domain II. Positions 144–154 (RLAADVEATEA) are flexible linker. The segment at 154-206 (AAGGALADAVSALVNLGYGQAQAHTAIAAAGRKAGEDATTETLIRLGLKELAK) is domain III.

Belongs to the RuvA family. As to quaternary structure, homotetramer. Forms an RuvA(8)-RuvB(12)-Holliday junction (HJ) complex. HJ DNA is sandwiched between 2 RuvA tetramers; dsDNA enters through RuvA and exits via RuvB. An RuvB hexamer assembles on each DNA strand where it exits the tetramer. Each RuvB hexamer is contacted by two RuvA subunits (via domain III) on 2 adjacent RuvB subunits; this complex drives branch migration. In the full resolvosome a probable DNA-RuvA(4)-RuvB(12)-RuvC(2) complex forms which resolves the HJ.

Its subcellular location is the cytoplasm. The RuvA-RuvB-RuvC complex processes Holliday junction (HJ) DNA during genetic recombination and DNA repair, while the RuvA-RuvB complex plays an important role in the rescue of blocked DNA replication forks via replication fork reversal (RFR). RuvA specifically binds to HJ cruciform DNA, conferring on it an open structure. The RuvB hexamer acts as an ATP-dependent pump, pulling dsDNA into and through the RuvAB complex. HJ branch migration allows RuvC to scan DNA until it finds its consensus sequence, where it cleaves and resolves the cruciform DNA. The polypeptide is Holliday junction branch migration complex subunit RuvA (Azorhizobium caulinodans (strain ATCC 43989 / DSM 5975 / JCM 20966 / LMG 6465 / NBRC 14845 / NCIMB 13405 / ORS 571)).